Reading from the N-terminus, the 598-residue chain is Fumarate reductase flavoprotein subunit (598 aa).

FAD is bound by residues 12–16, 36–38, 44–52, 156–158, and Asp212; these read GAGGA, ISK, SHTVAAEGG, and HFV. His45 is subject to Tele-8alpha-FAD histidine. Catalysis depends on residues His233 and Arg249. FAD contacts are provided by residues 356-357, Glu380, and 391-397; these read HY and RLGSNSL. Positions 577–598 are disordered; it reads AKRVYGGEADAQEKSDKEQANG. Over residues 587 to 598 the composition is skewed to basic and acidic residues; the sequence is AQEKSDKEQANG.

This sequence belongs to the FAD-dependent oxidoreductase 2 family. FRD/SDH subfamily. Part of an enzyme complex containing four subunits: a flavoprotein (FrdA), an iron-sulfur protein (FrdB), and two hydrophobic anchor proteins (FrdC and FrdD). Interacts with SdhE. The cofactor is FAD.

Its subcellular location is the cell inner membrane. The catalysed reaction is a quinone + succinate = fumarate + a quinol. It carries out the reaction a menaquinone + succinate = a menaquinol + fumarate. Two distinct, membrane-bound, FAD-containing enzymes are responsible for the catalysis of fumarate and succinate interconversion; the fumarate reductase is used in anaerobic growth, and the succinate dehydrogenase is used in aerobic growth. The polypeptide is Fumarate reductase flavoprotein subunit (Serratia sp. (strain ATCC 39006) (Prodigiosinella confusarubida)).